The primary structure comprises 147 residues: Nucleoside diphosphate kinase (147 aa).

Residues K9, F57, R85, T91, R102, and N112 each coordinate ATP. Residue H115 is the Pros-phosphohistidine intermediate of the active site.

Belongs to the NDK family. In terms of assembly, homotetramer. Mg(2+) serves as cofactor.

It is found in the cytoplasm. The catalysed reaction is a 2'-deoxyribonucleoside 5'-diphosphate + ATP = a 2'-deoxyribonucleoside 5'-triphosphate + ADP. It catalyses the reaction a ribonucleoside 5'-diphosphate + ATP = a ribonucleoside 5'-triphosphate + ADP. In terms of biological role, major role in the synthesis of nucleoside triphosphates other than ATP. The ATP gamma phosphate is transferred to the NDP beta phosphate via a ping-pong mechanism, using a phosphorylated active-site intermediate. This chain is Nucleoside diphosphate kinase, found in Listeria monocytogenes serotype 4b (strain F2365).